The following is a 239-amino-acid chain: Immunoglobulin superfamily member 23 (239 aa).

The disordered stretch occupies residues 63–93 (ELEAQPPTSSSPKGLPGRPRTSQEVPNAEDN). In terms of domain architecture, Ig-like spans 94–179 (PSLIPLVTFP…ELVSEPVTVS (86 aa)). Residues 214-234 (LIVAATIGGLVLIGSVCFYIL) traverse the membrane as a helical segment.

It is found in the cell membrane. Functionally, may be involved in osteoclast differentiation. This Mus musculus (Mouse) protein is Immunoglobulin superfamily member 23.